We begin with the raw amino-acid sequence, 699 residues long: Auxin response factor 1 (699 aa).

Positions 122–224 form a DNA-binding region, TF-B3; it reads FCKILTPSDT…EQRVGVRRLV (103 aa). Disordered regions lie at residues 539-565 and 680-699; these read TTTD…DSGQ and EPHP…KTGF. The region spanning 595–684 is the PB1 domain; sequence RTRIKVQMHG…DEKKIEPHPK (90 aa). Polar residues predominate over residues 687 to 699; the sequence is SSANPEQDQKTGF.

It belongs to the ARF family. In terms of assembly, homodimers and heterodimers. As to expression, expressed in roots, culms, leaves and young panicles.

It is found in the nucleus. Functionally, auxin response factors (ARFs) are transcriptional factors that bind specifically to the DNA sequence 5'-TGTCTC-3' found in the auxin-responsive promoter elements (AuxREs). This Oryza sativa subsp. japonica (Rice) protein is Auxin response factor 1 (ARF1).